The chain runs to 344 residues: Cell division protein ZipA (344 aa).

Residues 1–6 (MEDLQL) are Periplasmic-facing. A helical transmembrane segment spans residues 7 to 27 (VLFVLGAIAIVAVLVHGFWSI). At 28-344 (RRQQPKSLKD…DYLHRIRANA (317 aa)) the chain is on the cytoplasmic side. 2 disordered regions span residues 75–94 (VRKA…PYLK) and 108–139 (QFKQ…ASRQ).

The protein belongs to the ZipA family. Interacts with FtsZ via their C-terminal domains.

It is found in the cell inner membrane. Functionally, essential cell division protein that stabilizes the FtsZ protofilaments by cross-linking them and that serves as a cytoplasmic membrane anchor for the Z ring. Also required for the recruitment to the septal ring of downstream cell division proteins. The protein is Cell division protein ZipA of Shewanella oneidensis (strain ATCC 700550 / JCM 31522 / CIP 106686 / LMG 19005 / NCIMB 14063 / MR-1).